The following is a 63-amino-acid chain: Large ribosomal subunit protein uL29 (63 aa).

Belongs to the universal ribosomal protein uL29 family.

The chain is Large ribosomal subunit protein uL29 (rpmC) from Buchnera aphidicola subsp. Acyrthosiphon kondoi (Acyrthosiphon kondoi symbiotic bacterium).